Consider the following 1202-residue polypeptide: Voltage-gated inwardly rectifying potassium channel KCNH6 (1202 aa).

Topologically, residues 1-405 are cytoplasmic; sequence MGSAALPHAR…YSPFKAVWDW (405 aa). The PAS domain occupies 36–84; that stretch reads IIYCNDGFCEMFGYSRVEVMQRPCTCDFLTGPDTTKSSIAQLTQALLGS. Residues 87–139 form the PAC domain; it reads CKLEILYYRKDTSCFRCLVDVVPVKNEDGVVIMFILNFEDLAQLIAKSSGRSL. Disordered stretches follow at residues 203–243 and 285–315; these read ENCV…LGPR and ERRA…SDSD. Positions 213 to 222 are enriched in basic and acidic residues; the sequence is LLEKERRPSL. The chain crosses the membrane as a helical span at residues 406–426; that stretch reads LILLLVIYTAVFTPYSAAFLL. Over 427–443 the chain is Extracellular; sequence NEEQGEEKHWNCSYSCD. N437 carries N-linked (GlcNAc...) asparagine glycosylation. Residues 444-464 traverse the membrane as a helical segment; it reads PLNIIDLIVDIMFIVDIVINF. The Cytoplasmic segment spans residues 465–485; the sequence is RTTYVNINDEVVSHPGKIAIH. A helical membrane pass occupies residues 486-506; sequence YFKGWFLIDMVAAIPFDLLIF. Over 507 to 515 the chain is Extracellular; it reads RSGSDETTT. Residues 516-536 traverse the membrane as a helical; Voltage-sensor segment; it reads LIGLLKTARLLRLVRVARKLD. Residues 537–543 lie on the Cytoplasmic side of the membrane; the sequence is RYSEYGA. A helical membrane pass occupies residues 544-564; sequence AVLFLLMCTFALIAHWLACIW. Over 565–608 the chain is Extracellular; that stretch reads YAIGNVERPYMEHKIGWLDNLGDQIGKRYNDSDLSSGPSIKDKY. An N-linked (GlcNAc...) asparagine glycan is attached at N594. Positions 609 to 629 form an intramembrane region, pore-forming; sequence VTALYFTFSSLTSVGFGNVSP. Residues 621-626 carry the Selectivity filter motif; it reads SVGFGN. Residues 630 to 635 are Extracellular-facing; sequence NTNSEK. A helical transmembrane segment spans residues 636–656; the sequence is IFSICVMLIGSLMYASIFGNV. The Cytoplasmic segment spans residues 657–1202; that stretch reads SAIIQRLYSG…HLSDPVLPGS (546 aa). Residues 739-839 form a cNMP-binding domain region; sequence AFRGASKGCL…IQREDLLEVL (101 aa). Disordered stretches follow at residues 912–948, 1092–1112, and 1140–1202; these read LTNP…GSPT, TPCA…PSYA, and TVYS…LPGS. Residues 928–937 are compositionally biased toward polar residues; sequence GSSTTPCSQT. Residues 1179–1195 are compositionally biased toward basic and acidic residues; that stretch reads EHLEASSEHQDIQRHLS.

The protein belongs to the potassium channel family. H (Eag) (TC 1.A.1.20) subfamily. Kv11.2/KCNH6 sub-subfamily. As to quaternary structure, the potassium channel is probably composed of a homo- or heterotetrameric complex of pore-forming alpha subunits that can associate only within their subfamily.

The protein localises to the cell membrane. It carries out the reaction K(+)(in) = K(+)(out). Functionally, pore-forming (alpha) subunit of voltage-gated inwardly rectifying potassium channel. Characterized by unusual gating kinetics by producing relatively small outward currents during membrane depolarization and large inward currents during subsequent repolarization which reflect a rapid inactivation during depolarization and quick recovery from inactivation but slow deactivation (closing) during repolarization. Activates even more slowly than KCNH2. The sequence is that of Voltage-gated inwardly rectifying potassium channel KCNH6 from Gallus gallus (Chicken).